We begin with the raw amino-acid sequence, 145 residues long: Bacilliredoxin SH1401 (145 aa).

This sequence belongs to the bacilliredoxin family.

This is Bacilliredoxin SH1401 from Staphylococcus haemolyticus (strain JCSC1435).